Reading from the N-terminus, the 776-residue chain is 5-methyltetrahydropteroyltriglutamate--homocysteine methyltransferase (776 aa).

5-methyltetrahydropteroyltri-L-glutamate-binding positions include 16–19 and lysine 112; that span reads RELK. Residues 432-434 and glutamate 485 each bind L-homocysteine; that span reads IGS. Residues 432 to 434 and glutamate 485 contribute to the L-methionine site; that span reads IGS. Residues 516–517 and tryptophan 562 each bind 5-methyltetrahydropteroyltri-L-glutamate; that span reads RC. Aspartate 600 is an L-homocysteine binding site. An L-methionine-binding site is contributed by aspartate 600. Glutamate 606 is a binding site for 5-methyltetrahydropteroyltri-L-glutamate. Histidine 642, cysteine 644, and glutamate 666 together coordinate Zn(2+). Histidine 695 (proton donor) is an active-site residue. Cysteine 727 contributes to the Zn(2+) binding site. The interval 755 to 776 is disordered; the sequence is HAGAVHAGTPATRAEHAESALA. A compositionally biased stretch (basic and acidic residues) spans 767–776; sequence RAEHAESALA.

The protein belongs to the vitamin-B12 independent methionine synthase family. It depends on Zn(2+) as a cofactor.

It carries out the reaction 5-methyltetrahydropteroyltri-L-glutamate + L-homocysteine = tetrahydropteroyltri-L-glutamate + L-methionine. It functions in the pathway amino-acid biosynthesis; L-methionine biosynthesis via de novo pathway; L-methionine from L-homocysteine (MetE route): step 1/1. Functionally, catalyzes the transfer of a methyl group from 5-methyltetrahydrofolate to homocysteine resulting in methionine formation. This chain is 5-methyltetrahydropteroyltriglutamate--homocysteine methyltransferase, found in Ralstonia nicotianae (strain ATCC BAA-1114 / GMI1000) (Ralstonia solanacearum).